The sequence spans 376 residues: MNRSFHKSQTLRFYDCSAVEVKSKFGAEFRRFSLDRHKPGKFEDFYKLVVHTHHISNSDVTIGYADVHGDLLPINNDDNFCKAVSSANPLLRVFIQKREEAERGSLGAGSLCRRRRALGALRDEGPRRRAHLDIGLPRDFRPVSSIIDVDLVPETHRRVRLHRHGCEKPLGFYIRDGASVRVTPHGLEKVPGIFISRMVPGGLAESTGLLAVNDEVLEVNGIEVAGKTLDQVTDMMIANSHNLIVTVKPANQRNNVVRGGRALGSSGPPSDGTAGFVGPPAPRVLQNFHPDEAESDEDNDVVIEGTLEPARPPQTPGAPAGSLSRVNGAGLAQRLQRDLALDGGLQRLLSSLRADPRHSLALPPGGVEEHGPAVTL.

The PB1 domain maps to 18–98; sequence AVEVKSKFGA…PLLRVFIQKR (81 aa). The interaction with PARD3 and CDC42 stretch occupies residues 127-254; the sequence is RRRAHLDIGL…VTVKPANQRN (128 aa). The Pseudo-CRIB domain maps to 134–151; the sequence is IGLPRDFRPVSSIIDVDL. The 94-residue stretch at 158–251 folds into the PDZ domain; it reads RVRLHRHGCE…NLIVTVKPAN (94 aa). The tract at residues 356–376 is disordered; that stretch reads PRHSLALPPGGVEEHGPAVTL. Positions 367–376 are enriched in basic and acidic residues; it reads VEEHGPAVTL.

Belongs to the PAR6 family. In terms of assembly, interacts with PARD3. Interacts with GTP-bound forms of CDC42, RHOQ/TC10 and RAC1. Interacts with the N-terminal part of PRKCI and PRKCZ. In terms of tissue distribution, widely expressed, with a higher expression in fetal and adult kidney.

It localises to the cytoplasm. The protein localises to the cell membrane. The protein resides in the cell junction. Its subcellular location is the tight junction. In terms of biological role, adapter protein involved in asymmetrical cell division and cell polarization processes. May play a role in the formation of epithelial tight junctions. The PARD6-PARD3 complex links GTP-bound Rho small GTPases to atypical protein kinase C proteins. This chain is Partitioning defective 6 homolog gamma (PARD6G), found in Homo sapiens (Human).